A 330-amino-acid chain; its full sequence is DNA-directed RNA polymerase subunit alpha (330 aa).

An alpha N-terminal domain (alpha-NTD) region spans residues 1-235 (MVREKVKVST…DLFIHFLHAK (235 aa)). The alpha C-terminal domain (alpha-CTD) stretch occupies residues 270–330 (IALKYIFIDQ…KQILGILEKK (61 aa)).

It belongs to the RNA polymerase alpha chain family. In plastids the minimal PEP RNA polymerase catalytic core is composed of four subunits: alpha, beta, beta', and beta''. When a (nuclear-encoded) sigma factor is associated with the core the holoenzyme is formed, which can initiate transcription.

The protein localises to the plastid. Its subcellular location is the chloroplast. It catalyses the reaction RNA(n) + a ribonucleoside 5'-triphosphate = RNA(n+1) + diphosphate. DNA-dependent RNA polymerase catalyzes the transcription of DNA into RNA using the four ribonucleoside triphosphates as substrates. The protein is DNA-directed RNA polymerase subunit alpha (rpoA) of Gossypium barbadense (Sea Island cotton).